The primary structure comprises 453 residues: Ribosomal protein uS12 methylthiotransferase RimO (453 aa).

The 111-residue stretch at 6–116 folds into the MTTase N-terminal domain; the sequence is PKVGFVSLGC…VMEAVHEALP (111 aa). The [4Fe-4S] cluster site is built by cysteine 15, cysteine 51, cysteine 80, cysteine 147, cysteine 151, and cysteine 154. One can recognise a Radical SAM core domain in the interval 133 to 370; that stretch reads LTPRHYAYLK…MEKQAQISAA (238 aa). The TRAM domain occupies 373–441; sequence EAKIGTVQQC…EHDLYGDALP (69 aa).

Belongs to the methylthiotransferase family. RimO subfamily. [4Fe-4S] cluster is required as a cofactor.

The protein resides in the cytoplasm. It catalyses the reaction L-aspartate(89)-[ribosomal protein uS12]-hydrogen + (sulfur carrier)-SH + AH2 + 2 S-adenosyl-L-methionine = 3-methylsulfanyl-L-aspartate(89)-[ribosomal protein uS12]-hydrogen + (sulfur carrier)-H + 5'-deoxyadenosine + L-methionine + A + S-adenosyl-L-homocysteine + 2 H(+). Functionally, catalyzes the methylthiolation of an aspartic acid residue of ribosomal protein uS12. This Stenotrophomonas maltophilia (strain K279a) protein is Ribosomal protein uS12 methylthiotransferase RimO.